Here is a 420-residue protein sequence, read N- to C-terminus: 2',3'-cyclic-nucleotide 3'-phosphodiesterase (420 aa).

A Phosphoserine modification is found at Ser-9. Tyr-110 carries the post-translational modification Phosphotyrosine. 3 positions are modified to phosphoserine: Ser-169, Ser-227, and Ser-239. His-250 (proton acceptor) is an active-site residue. A substrate-binding site is contributed by Thr-252. His-329 functions as the Proton donor in the catalytic mechanism. Thr-331 contributes to the substrate binding site. Ser-358 bears the Phosphoserine mark. Residue Cys-417 is modified to Cysteine methyl ester. The S-farnesyl cysteine moiety is linked to residue Cys-417. Residues 418–420 (TII) constitute a propeptide, removed in mature form.

This sequence belongs to the 2H phosphoesterase superfamily. CNPase family. As to quaternary structure, exists as monomers and homodimers.

The protein localises to the membrane. It is found in the melanosome. It catalyses the reaction a nucleoside 2',3'-cyclic phosphate + H2O = a nucleoside 2'-phosphate + H(+). Catalyzes the formation of 2'-nucleotide products from 2',3'-cyclic substrates. May participate in RNA metabolism in the myelinating cell, CNP is the third most abundant protein in central nervous system myelin. The sequence is that of 2',3'-cyclic-nucleotide 3'-phosphodiesterase from Mus musculus (Mouse).